Consider the following 307-residue polypeptide: Glutaminase (307 aa).

Residues serine 66, asparagine 116, glutamate 160, asparagine 167, tyrosine 191, tyrosine 243, and valine 261 each contribute to the substrate site.

It belongs to the glutaminase family. As to quaternary structure, homotetramer.

It catalyses the reaction L-glutamine + H2O = L-glutamate + NH4(+). The chain is Glutaminase from Pseudoalteromonas translucida (strain TAC 125).